The chain runs to 803 residues: MADMSVKQLADLVRTTPERLLEQLKEAGVAITHVDQTISDEEKRKLLLHLKTSHSTETDKKRSKIVLKRKKLSVVKSGKKSVNVEIRSKRTYTKPVVEQKRETEPAPTQEVPLTSDTTNLNEKAEVNVATLEKAVEAEVKEEAKKTPSEKKETPKKGPRKETRRSRKPDKEDKWEREELHMTKLVEERRRRHKPAHMPDSDSASAKLEQGFARPTAPVVREVALPESITVADLAQKMSVKAAEVIKAMMKLGAMVTINQRIDQETAAIVVEEMGHKPKLIKEDVLEENLVATLGEQTGEAVPRAPVVTIMGHVDHGKTSLLDYIRRTKVTSTEAGGITQHIGAYHVETELGMITFLDTPGHEAFTAMRARGAKCTDIVVLVVAADDGVMPQTVEAIQHARAAKVPVVVAVNKIDKPEADPERIKTELSTHDVLPEEWGGDTMFQPISAKTGEGIDALLERILLQAEVLELKAVDNGPARGMVVESRLDRGRGPVATVLVTSGELHLGDILLVGREYGRVRAMIGDDGRPCESAGPSMPVEVLGLSGTSVAGEEAIVVPDERKAREIARFRQGKYREVRLAKKQTAHLERIFDRMGEGKQNTLNIVLKADVQGSLEALTEALNKLSTDEVKVNIIASGVGGITESDVNLAIASDAVVIGFNVRADAPTRVLVEREGVDLRYYSIIYDLIDEVKKALSGLLAPEFEEKIVGLAEVRDVFRSSKIGAIAGCMVVEGVVRRHLPIRVLRDNVVIYEGQLESLRRYKEDVAEVRQGTECGIGVKNYNDVKVGDQIEVYEKTQVHRTIA.

Disordered regions lie at residues 95–125 and 138–178; these read PVVEQKRETEPAPTQEVPLTSDTTNLNEKAE and EVKE…EREE. Polar residues predominate over residues 111–121; that stretch reads VPLTSDTTNLN. The span at 138 to 155 shows a compositional bias: basic and acidic residues; it reads EVKEEAKKTPSEKKETPK. Residues 156–167 are compositionally biased toward basic residues; the sequence is KGPRKETRRSRK. Over residues 168 to 178 the composition is skewed to basic and acidic residues; sequence PDKEDKWEREE. Residues 302–471 enclose the tr-type G domain; that stretch reads PRAPVVTIMG…LLQAEVLELK (170 aa). The G1 stretch occupies residues 311–318; sequence GHVDHGKT. GTP is bound at residue 311–318; that stretch reads GHVDHGKT. The tract at residues 336–340 is G2; it reads GITQH. The G3 stretch occupies residues 357-360; it reads DTPG. GTP is bound by residues 357–361 and 411–414; these read DTPGH and NKID. The tract at residues 411–414 is G4; sequence NKID. A G5 region spans residues 447–449; that stretch reads SAK.

The protein belongs to the TRAFAC class translation factor GTPase superfamily. Classic translation factor GTPase family. IF-2 subfamily.

The protein resides in the cytoplasm. One of the essential components for the initiation of protein synthesis. Protects formylmethionyl-tRNA from spontaneous hydrolysis and promotes its binding to the 30S ribosomal subunits. Also involved in the hydrolysis of GTP during the formation of the 70S ribosomal complex. The protein is Translation initiation factor IF-2 of Coxiella burnetii (strain RSA 331 / Henzerling II).